The chain runs to 315 residues: DNA-directed RNA polymerase subunit alpha (315 aa).

The segment at 1-228 (MLEIEKPKIE…EHLRLFVGLT (228 aa)) is alpha N-terminal domain (alpha-NTD). Residues 245-315 (KNKLLEMPIE…LGLDLRHDEE (71 aa)) are alpha C-terminal domain (alpha-CTD).

The protein belongs to the RNA polymerase alpha chain family. As to quaternary structure, homodimer. The RNAP catalytic core consists of 2 alpha, 1 beta, 1 beta' and 1 omega subunit. When a sigma factor is associated with the core the holoenzyme is formed, which can initiate transcription.

It catalyses the reaction RNA(n) + a ribonucleoside 5'-triphosphate = RNA(n+1) + diphosphate. Functionally, DNA-dependent RNA polymerase catalyzes the transcription of DNA into RNA using the four ribonucleoside triphosphates as substrates. In Desulforudis audaxviator (strain MP104C), this protein is DNA-directed RNA polymerase subunit alpha.